Reading from the N-terminus, the 263-residue chain is Lens fiber major intrinsic protein (263 aa).

The Cytoplasmic segment spans residues 1–9 (MWELRSASF). A helical transmembrane segment spans residues 10 to 29 (WRAIFAEFFATLFYVFFGLG). Over 30-41 (ASLRWAPGPLHV) the chain is Extracellular. The chain crosses the membrane as a helical span at residues 42–59 (LQVALAFGLALATLVQAV). The Cytoplasmic segment spans residues 60–61 (GH). An intramembrane region (discontinuously helical) is located at residues 62–77 (ISGAHVNPAVTFAFLV). The short motif at 68-70 (NPA) is the NPA 1 element. The Cytoplasmic portion of the chain corresponds to 78–82 (GSQMS). A helical transmembrane segment spans residues 83–106 (LLRAICYMAAQLLGAVAGAAVLYS). At 107-127 (VTPAAVRGNLALNTLHPGVSL) the chain is on the extracellular side. The helical transmembrane segment at 128–148 (GQATTVEIFLTLQFVLCIFAT) threads the bilayer. The Cytoplasmic segment spans residues 149–156 (YDERRNGR). A helical membrane pass occupies residues 157 to 175 (LGSVALAVGFSLTLGHLFG). Over 176 to 178 (MYY) the chain is Extracellular. An intramembrane region (discontinuously helical) is located at residues 179–193 (TGAGMNPARSFAPAI). Residues 184-186 (NPA) carry the NPA 2 motif. The Extracellular segment spans residues 194-200 (LTRNFTN). The chain crosses the membrane as a helical span at residues 201–222 (HWVYWVGPIIGGGLASLLYDFL). Residues 223-263 (LFPRLKSVSERLSILKGARPSDSNGQPEGTGEPVELKTQAL) are Cytoplasmic-facing. The tract at residues 227 to 237 (LKSVSERLSIL) is interaction with CALM. A phosphoserine mark is found at serine 235, serine 243, and serine 245. The segment at 240 to 263 (ARPSDSNGQPEGTGEPVELKTQAL) is disordered. Position 246 is a deamidated asparagine (asparagine 246).

It belongs to the MIP/aquaporin (TC 1.A.8) family. In terms of assembly, homotetramer; each monomer provides an independent water pore. Two homotetramers on opposing membranes can dimerize, forming a cell-cell junction. Interacts with CALM; the calcium-calmodulin/CALM complex interacts with the cytoplasmic domains of two aquaporins, leading to channel closure. Interacts with BFSP1 (via C-terminus); prevents calcium-dependent inhibition of the water channel activity. Post-translationally, subject to partial proteolytic cleavage in the eye lens core. Partial proteolysis promotes interactions between tetramers from adjoining membranes. In terms of processing, fatty acylated at Met-1 and Lys-238. The acyl modifications, in decreasing order of ion abundance, are: oleoyl (C18:1) &gt; palmitoyl (C16:0) &gt; stearoyl (C18:0) &gt; eicosenoyl (C20:1) &gt; dihomo-gamma-linolenoyl (C20:3) &gt; palmitoleoyl (C16:1) &gt; eicosadienoyl (C20:2).

It is found in the cell membrane. Its subcellular location is the cell junction. It carries out the reaction H2O(in) = H2O(out). With respect to regulation, the water channel activity is inhibited by calcium through calmodulin/CALM. In terms of biological role, aquaporins form homotetrameric transmembrane channels, with each monomer independently mediating water transport across the plasma membrane along its osmotic gradient. Specifically expressed in lens fiber cells, this aquaporin is crucial for maintaining lens water homeostasis and transparency. Beyond water permeability, it also acts as a cell-to-cell adhesion molecule, forming thin junctions between lens fiber cells that are essential for maintaining the ordered structure and transparency of the lens. This Oryctolagus cuniculus (Rabbit) protein is Lens fiber major intrinsic protein.